The sequence spans 284 residues: MVLMIVSGRSGSGKSVALRALEDMGFYCVDNLPVVLLPDLARTLADREISAAVSIDVRNMPESPEIFEQAMSNLPDAFSPQLLFLDADRNTLIRRYSDTRRLHPLSSKNLSLESAIDKESDLLEPLRSRADLIVDTSEMSVHELAEMLRTRLLGKRERELTMVFESFGFKHGIPIDADYVFDVRFLPNPHWDPKLRPMTGLDKPVAAFLDRHTEVHNFIYQTRSYLELWLPVLETNNRSYLTVAIGCTGGKHRSVYIAEQLADYFRSRGKNVQSRHRTLEKRKP.

Position 8-15 (8-15 (GRSGSGKS)) interacts with ATP. 56-59 (DVRN) contacts GTP. Residues 266–284 (RSRGKNVQSRHRTLEKRKP) form an RNA-binding region.

Belongs to the RapZ-like family. RapZ subfamily. As to quaternary structure, homotrimer.

In terms of biological role, modulates the synthesis of GlmS, by affecting the processing and stability of the regulatory small RNA GlmZ. When glucosamine-6-phosphate (GlcN6P) concentrations are high in the cell, RapZ binds GlmZ and targets it to cleavage by RNase E. Consequently, GlmZ is inactivated and unable to activate GlmS synthesis. Under low GlcN6P concentrations, RapZ is sequestered and inactivated by an other regulatory small RNA, GlmY, preventing GlmZ degradation and leading to synthesis of GlmS. The protein is RNase adapter protein RapZ of Escherichia coli O1:K1 / APEC.